Reading from the N-terminus, the 71-residue chain is Conotoxin Pl071 (71 aa).

Positions 1–20 (MSRLFMILLVICVITLGTDA) are cleaved as a signal peptide. A propeptide spanning residues 21 to 31 (SQAEDSGTEKR) is cleaved from the precursor. Tyrosine 69 carries the post-translational modification Tyrosine amide.

It belongs to the conotoxin NSf-1 superfamily. Expressed by the venom duct.

The protein localises to the secreted. In terms of biological role, probable neurotoxin with unknown target. Possibly targets ion channels. The protein is Conotoxin Pl071 of Conus planorbis (Planorbis cone).